The following is a 310-amino-acid chain: 4-hydroxyproline 2-epimerase (310 aa).

Cys-88 (proton acceptor) is an active-site residue. Substrate is bound by residues 89-90 (GH), His-208, and Asp-232. The active-site Proton donor is the Cys-236. Substrate is bound at residue 237–238 (GT).

This sequence belongs to the proline racemase family.

It catalyses the reaction trans-4-hydroxy-L-proline = cis-4-hydroxy-D-proline. Its function is as follows. Catalyzes the epimerization of trans-4-hydroxy-L-proline (t4LHyp) to cis-4-hydroxy-D-proline (c4DHyp). Is likely involved in a degradation pathway that converts t4LHyp to alpha-ketoglutarate. Displays no proline racemase activity. This Acinetobacter baumannii (strain ATCC 17978 / DSM 105126 / CIP 53.77 / LMG 1025 / NCDC KC755 / 5377) protein is 4-hydroxyproline 2-epimerase.